A 278-amino-acid chain; its full sequence is Ribosomal RNA small subunit methyltransferase A (278 aa).

Residues N28, L30, G55, E77, D103, and N122 each contribute to the S-adenosyl-L-methionine site.

The protein belongs to the class I-like SAM-binding methyltransferase superfamily. rRNA adenine N(6)-methyltransferase family. RsmA subfamily.

It is found in the cytoplasm. The enzyme catalyses adenosine(1518)/adenosine(1519) in 16S rRNA + 4 S-adenosyl-L-methionine = N(6)-dimethyladenosine(1518)/N(6)-dimethyladenosine(1519) in 16S rRNA + 4 S-adenosyl-L-homocysteine + 4 H(+). In terms of biological role, specifically dimethylates two adjacent adenosines (A1518 and A1519) in the loop of a conserved hairpin near the 3'-end of 16S rRNA in the 30S particle. May play a critical role in biogenesis of 30S subunits. This is Ribosomal RNA small subunit methyltransferase A from Cereibacter sphaeroides (strain ATCC 17025 / ATH 2.4.3) (Rhodobacter sphaeroides).